Here is a 26-residue protein sequence, read N- to C-terminus: uncharacterized protein (26 aa).

It is found in the plastid. The protein localises to the chloroplast. This is an uncharacterized protein from Trieres chinensis (Marine centric diatom).